The chain runs to 184 residues: Serine recombinase PinE (184 aa).

The 134-residue stretch at 1 to 134 folds into the Resolvase/invertase-type recombinase catalytic domain; it reads MLIGYVRVST…AGLETARAQG (134 aa). The active-site O-(5'-phospho-DNA)-serine intermediate is Ser9. A DNA-binding region (H-T-H motif) is located at residues 161–180; sequence RQKVAIIYDVGVSTLYKRFP.

Belongs to the site-specific recombinase resolvase family.

Its function is as follows. This protein catalyzes the inversion of an 1800-bp E.coli DNA fragment, the P region, which can exist in either orientation. The function of the inversion is not yet clear. The polypeptide is Serine recombinase PinE (pinE) (Escherichia coli (strain K12)).